The sequence spans 303 residues: Glucosyl-3-phosphoglycerate synthase (303 aa).

UDP-alpha-D-glucose-binding positions include 35 to 39 (PALNE), S66, K99, and 119 to 120 (DS). Residue D121 participates in Mn(2+) binding. Residue 166-169 (GRVT) coordinates (2R)-3-phosphoglycerate. Residues 211–214 (YGVE) and 238–243 (RAHRNR) contribute to the UDP-alpha-D-glucose site. Position 240 (H240) interacts with Mn(2+). A (2R)-3-phosphoglycerate-binding site is contributed by N242.

It belongs to the glycosyltransferase 2 family. As to quaternary structure, homotrimer. It depends on Mg(2+) as a cofactor. Requires Mn(2+) as cofactor.

It catalyses the reaction an NDP-alpha-D-glucose + (2R)-3-phosphoglycerate = (2R)-2-O-(alpha-D-glucopyranosyl)-3-phospho-glycerate + a ribonucleoside 5'-diphosphate + H(+). The catalysed reaction is (2R)-3-phosphoglycerate + UDP-alpha-D-glucose = (2R)-2-O-(alpha-D-glucopyranosyl)-3-phospho-glycerate + UDP + H(+). The enzyme catalyses ADP-alpha-D-glucose + (2R)-3-phosphoglycerate = (2R)-2-O-(alpha-D-glucopyranosyl)-3-phospho-glycerate + ADP + H(+). It carries out the reaction GDP-D-glucose + (2R)-3-phosphoglycerate = (2R)-2-O-(alpha-D-glucopyranosyl)-3-phospho-glycerate + GDP + H(+). In terms of biological role, involved in the biosynthesis of 6-O-methylglucose lipopolysaccarides (MGLPs). Catalyzes the transfer of the glucose moiety from a nuleotide sugar such as UDP-alpha-D-glucose to the position 2 of 3-phospho-D-glycerate (3-PGA) to form glucosyl-3-phosphoglycerate (GPG). It can use UDP-glucose, ADP-glucose and GDP-glucose as sugar donor substrates with decreasing affinity and with 3-PGA as an acceptor. D-glycerate can only be an acceptor with ADP-glucose and at a very low rate. The sequence is that of Glucosyl-3-phosphoglycerate synthase (gpgS) from Mycolicibacterium smegmatis (strain ATCC 700084 / mc(2)155) (Mycobacterium smegmatis).